The chain runs to 958 residues: Glycine dehydrogenase (decarboxylating) (958 aa).

Lys-707 is modified (N6-(pyridoxal phosphate)lysine).

This sequence belongs to the GcvP family. As to quaternary structure, the glycine cleavage system is composed of four proteins: P, T, L and H. Requires pyridoxal 5'-phosphate as cofactor.

The catalysed reaction is N(6)-[(R)-lipoyl]-L-lysyl-[glycine-cleavage complex H protein] + glycine + H(+) = N(6)-[(R)-S(8)-aminomethyldihydrolipoyl]-L-lysyl-[glycine-cleavage complex H protein] + CO2. The glycine cleavage system catalyzes the degradation of glycine. The P protein binds the alpha-amino group of glycine through its pyridoxal phosphate cofactor; CO(2) is released and the remaining methylamine moiety is then transferred to the lipoamide cofactor of the H protein. The sequence is that of Glycine dehydrogenase (decarboxylating) from Stutzerimonas stutzeri (strain A1501) (Pseudomonas stutzeri).